We begin with the raw amino-acid sequence, 872 residues long: Chaperone protein ClpB 2 (872 aa).

One can recognise a Clp R domain in the interval 6 to 148 (PNQFTEKAWE…KNIIKQVRGS (143 aa)). Repeat regions lie at residues 9–73 (FTEK…IQRQ) and 85–148 (LGRS…VRGS). The tract at residues 161–342 (QSLEKYGRDL…RRFQQVYVDQ (182 aa)) is NBD1. 208 to 215 (GEPGVGKT) contacts ATP. Residues 343 to 551 (PSVEDTISIL…IAEIISKWTG (209 aa)) form a linker region. The stretch at 393-527 (IDLVDEAAAR…TERELSQTQG (135 aa)) forms a coiled coil. The segment at 561–772 (EKEKLLHLED…RIDEVIIFHS (212 aa)) is NBD2. 611–618 (GPTGVGKT) is an ATP binding site. Residues 773 to 872 (LDKKELRQIV…SRLPVEVFSS (100 aa)) form a C-terminal region.

Belongs to the ClpA/ClpB family. As to quaternary structure, homohexamer. The oligomerization is ATP-dependent.

Its subcellular location is the cytoplasm. Its function is as follows. Part of a stress-induced multi-chaperone system, it is involved in the recovery of the cell from heat-induced damage, in cooperation with DnaK, DnaJ and GrpE. Acts before DnaK, in the processing of protein aggregates. Protein binding stimulates the ATPase activity; ATP hydrolysis unfolds the denatured protein aggregates, which probably helps expose new hydrophobic binding sites on the surface of ClpB-bound aggregates, contributing to the solubilization and refolding of denatured protein aggregates by DnaK. The polypeptide is Chaperone protein ClpB 2 (clpB2) (Nostoc sp. (strain PCC 7120 / SAG 25.82 / UTEX 2576)).